The chain runs to 293 residues: MDIALAIKALILGIVEGLTEFLPISSTGHLILAGQLLDFNDEKGKIFEIVIQFGAILAVCWEFRHKIIDVIKGLPNDPRQQRFALNVIVATIPAITLALIFGKAIKAHLFNPIVVASAFIIGGLVILWAEWRERHRGQTHDPRGNALLEAAKAGAPRVETLDDLRLSDAFKVGLAQCFALIPGTSRSGSTIIGGLLFGLSRKVATEFSFFLAIPVIFGATVYELYKERALLSTDDLSIFGIGFVAAFISAFFCVRWLLRFIASHDFRGFAWYRIVFGVIVLVTAYTHLIAWQA.

The next 7 membrane-spanning stretches (helical) occupy residues 3-23, 43-63, 85-105, 109-129, 203-223, 238-258, and 269-289; these read IALA…EFLP, KGKI…CWEF, LNVI…GKAI, LFNP…ILWA, VATE…TVYE, IFGI…RWLL, and FAWY…THLI.

The protein belongs to the UppP family.

Its subcellular location is the cell inner membrane. It carries out the reaction di-trans,octa-cis-undecaprenyl diphosphate + H2O = di-trans,octa-cis-undecaprenyl phosphate + phosphate + H(+). Its function is as follows. Catalyzes the dephosphorylation of undecaprenyl diphosphate (UPP). Confers resistance to bacitracin. The sequence is that of Undecaprenyl-diphosphatase from Ralstonia nicotianae (strain ATCC BAA-1114 / GMI1000) (Ralstonia solanacearum).